The following is a 223-amino-acid chain: Large ribosomal subunit protein bL25 (223 aa).

This sequence belongs to the bacterial ribosomal protein bL25 family. CTC subfamily. In terms of assembly, part of the 50S ribosomal subunit; part of the 5S rRNA/L5/L18/L25 subcomplex. Contacts the 5S rRNA. Binds to the 5S rRNA independently of L5 and L18.

This is one of the proteins that binds to the 5S RNA in the ribosome where it forms part of the central protuberance. This chain is Large ribosomal subunit protein bL25, found in Albidiferax ferrireducens (strain ATCC BAA-621 / DSM 15236 / T118) (Rhodoferax ferrireducens).